We begin with the raw amino-acid sequence, 893 residues long: Valine--tRNA ligase (893 aa).

The 'HIGH' region motif lies at Pro-57–His-67. A 'KMSKS' region motif is present at residues Lys-545–Ser-549. Lys-548 is an ATP binding site. The stretch at Thr-821 to Glu-855 forms a coiled coil.

It belongs to the class-I aminoacyl-tRNA synthetase family. ValS type 1 subfamily. As to quaternary structure, monomer.

The protein localises to the cytoplasm. The catalysed reaction is tRNA(Val) + L-valine + ATP = L-valyl-tRNA(Val) + AMP + diphosphate. In terms of biological role, catalyzes the attachment of valine to tRNA(Val). As ValRS can inadvertently accommodate and process structurally similar amino acids such as threonine, to avoid such errors, it has a 'posttransfer' editing activity that hydrolyzes mischarged Thr-tRNA(Val) in a tRNA-dependent manner. The protein is Valine--tRNA ligase of Nocardia farcinica (strain IFM 10152).